Reading from the N-terminus, the 576-residue chain is uncharacterized protein (576 aa).

Positions Asp241–Ala261 are enriched in polar residues. A disordered region spans residues Asp241–Pro270.

This is an uncharacterized protein from Bacillus subtilis (strain 168).